The sequence spans 129 residues: Large ribosomal subunit protein bL19 (129 aa).

It belongs to the bacterial ribosomal protein bL19 family.

In terms of biological role, this protein is located at the 30S-50S ribosomal subunit interface and may play a role in the structure and function of the aminoacyl-tRNA binding site. The polypeptide is Large ribosomal subunit protein bL19 (Methylobacillus flagellatus (strain ATCC 51484 / DSM 6875 / VKM B-1610 / KT)).